A 222-amino-acid polypeptide reads, in one-letter code: ATP-dependent Clp protease proteolytic subunit 1 (222 aa).

The active-site Nucleophile is the S121. Residue H146 is part of the active site.

The protein belongs to the peptidase S14 family. As to quaternary structure, fourteen ClpP subunits assemble into 2 heptameric rings which stack back to back to give a disk-like structure with a central cavity, resembling the structure of eukaryotic proteasomes.

Its subcellular location is the cytoplasm. It carries out the reaction Hydrolysis of proteins to small peptides in the presence of ATP and magnesium. alpha-casein is the usual test substrate. In the absence of ATP, only oligopeptides shorter than five residues are hydrolyzed (such as succinyl-Leu-Tyr-|-NHMec, and Leu-Tyr-Leu-|-Tyr-Trp, in which cleavage of the -Tyr-|-Leu- and -Tyr-|-Trp bonds also occurs).. Functionally, cleaves peptides in various proteins in a process that requires ATP hydrolysis. Has a chymotrypsin-like activity. Plays a major role in the degradation of misfolded proteins. The polypeptide is ATP-dependent Clp protease proteolytic subunit 1 (Thermobifida fusca (strain YX)).